Reading from the N-terminus, the 509-residue chain is Coiled-coil domain-containing protein 181 (509 aa).

Positions glutamate 46–aspartate 82 are enriched in basic and acidic residues. Disordered regions lie at residues glutamate 46–aspartate 120 and proline 241–glutamate 367. Polar residues-rich tracts occupy residues asparagine 243–glycine 266 and threonine 300–cysteine 334. The stretch at leucine 335 to valine 375 forms a coiled coil. The span at arginine 338–glutamate 367 shows a compositional bias: basic and acidic residues.

It belongs to the CCDC181 family. Homodimer. Interacts with HOOK1. Interacts with HOOK2. Interacts with HOOK3.

It is found in the cytoplasm. The protein resides in the cytoskeleton. It localises to the cell projection. The protein localises to the cilium. Its subcellular location is the flagellum. Its function is as follows. Microtubule-binding protein that localizes to the microtubular manchette of elongating spermatids. The polypeptide is Coiled-coil domain-containing protein 181 (Homo sapiens (Human)).